The primary structure comprises 141 residues: Large ribosomal subunit protein uL11c (141 aa).

It belongs to the universal ribosomal protein uL11 family. As to quaternary structure, part of the ribosomal stalk of the 50S ribosomal subunit. Interacts with L10 and the large rRNA to form the base of the stalk. L10 forms an elongated spine to which L12 dimers bind in a sequential fashion forming a multimeric L10(L12)X complex.

The protein resides in the plastid. It is found in the cyanelle. Its function is as follows. Forms part of the ribosomal stalk which helps the ribosome interact with GTP-bound translation factors. The protein is Large ribosomal subunit protein uL11c of Cyanophora paradoxa.